The chain runs to 196 residues: ATP-dependent Clp protease proteolytic subunit (196 aa).

Residue serine 101 is the Nucleophile of the active site. Histidine 126 is an active-site residue.

Belongs to the peptidase S14 family. Component of the chloroplastic Clp protease core complex.

It localises to the plastid. The protein resides in the chloroplast stroma. The catalysed reaction is Hydrolysis of proteins to small peptides in the presence of ATP and magnesium. alpha-casein is the usual test substrate. In the absence of ATP, only oligopeptides shorter than five residues are hydrolyzed (such as succinyl-Leu-Tyr-|-NHMec, and Leu-Tyr-Leu-|-Tyr-Trp, in which cleavage of the -Tyr-|-Leu- and -Tyr-|-Trp bonds also occurs).. Cleaves peptides in various proteins in a process that requires ATP hydrolysis. Has a chymotrypsin-like activity. Plays a major role in the degradation of misfolded proteins. In Lactuca sativa (Garden lettuce), this protein is ATP-dependent Clp protease proteolytic subunit.